The primary structure comprises 413 residues: Alpha-1-antitrypsin-like protein GS55-MS (413 aa).

A signal peptide spans 1–24 (MPSSISWGLLLLAGLSCLVAGSLA). Asn-65, Asn-102, and Asn-266 each carry an N-linked (GlcNAc...) asparagine glycan. The segment at 368-387 (GATFLEMMPMSLPPEVKFDK) is RCL.

This sequence belongs to the serpin family.

The protein resides in the secreted. Its function is as follows. Inhibitor of serine proteases. Its primary target is elastase, but it also has a moderate affinity for plasmin and thrombin. The polypeptide is Alpha-1-antitrypsin-like protein GS55-MS (Ictidomys tridecemlineatus (Thirteen-lined ground squirrel)).